The primary structure comprises 229 residues: Biosynthetic peptidoglycan transglycosylase (229 aa).

Residues 11–31 (NLLLALFLVLVAGPVVAVILY) form a helical membrane-spanning segment.

It belongs to the glycosyltransferase 51 family.

Its subcellular location is the cell inner membrane. The catalysed reaction is [GlcNAc-(1-&gt;4)-Mur2Ac(oyl-L-Ala-gamma-D-Glu-L-Lys-D-Ala-D-Ala)](n)-di-trans,octa-cis-undecaprenyl diphosphate + beta-D-GlcNAc-(1-&gt;4)-Mur2Ac(oyl-L-Ala-gamma-D-Glu-L-Lys-D-Ala-D-Ala)-di-trans,octa-cis-undecaprenyl diphosphate = [GlcNAc-(1-&gt;4)-Mur2Ac(oyl-L-Ala-gamma-D-Glu-L-Lys-D-Ala-D-Ala)](n+1)-di-trans,octa-cis-undecaprenyl diphosphate + di-trans,octa-cis-undecaprenyl diphosphate + H(+). The protein operates within cell wall biogenesis; peptidoglycan biosynthesis. Its function is as follows. Peptidoglycan polymerase that catalyzes glycan chain elongation from lipid-linked precursors. The sequence is that of Biosynthetic peptidoglycan transglycosylase from Caulobacter vibrioides (strain ATCC 19089 / CIP 103742 / CB 15) (Caulobacter crescentus).